We begin with the raw amino-acid sequence, 781 residues long: Catenin beta-1 (781 aa).

A2 carries the post-translational modification N-acetylalanine. Residues 2–23 (ATQADLMELDMAMEPDRKAAVS) are interaction with VCL. S23 bears the Phosphoserine; by GSK3-beta; alternate mark. The O-linked (GlcNAc) serine; alternate glycan is linked to S23. The residue at position 29 (S29) is a Phosphoserine; by GSK3-beta. S33 and S37 each carry phosphoserine; by GSK3-beta and HIPK2. Residues 34-57 (GIHSGATTTAPSLSGKGNPEEEDV) are disordered. Residue T41 is modified to Phosphothreonine; by GSK3-beta. Position 45 is a phosphoserine (S45). N6-acetyllysine is present on K49. Phosphotyrosine; by PTK6 is present on Y64. The residue at position 142 (Y142) is a Phosphotyrosine; by FYN and PTK6. ARM repeat units follow at residues 151–191 (RAIP…IMRS), 193–234 (QMVS…IFKS), 235–276 (GGIP…VRLA), 277–318 (GGLQ…ILAS), 319–360 (GGPQ…IVEA), 361–389 (GGMQ…RNLS), 400–441 (GLLG…VCQV), 442–484 (GGIE…AQNA), 489–530 (YGLP…LREQ), 531–571 (GAIP…EIVE), 594–636 (NTIP…AEGA), and 637–666 (TAPL…SEDK). The tract at residues 156–178 (LTKLLNDEDQVVVNKAAVMVHQL) is interaction with BCL9. The residue at position 191 (S191) is a Phosphoserine. Position 246 is a phosphoserine; by CDK5 (S246). 2 positions are modified to phosphotyrosine: Y331 and Y333. A Phosphoserine modification is found at S552. T556 bears the Phosphothreonine mark. C619 is modified (S-nitrosocysteine). At S675 the chain carries Phosphoserine. Residues 720–781 (HSGGYGQDAL…NQLAWFDTDL (62 aa)) are disordered. Residues 734-745 (MMEHEMGGHHPG) show a composition bias toward basic and acidic residues. The tract at residues 772-781 (NQLAWFDTDL) is interaction with SCRIB.

This sequence belongs to the beta-catenin family. As to quaternary structure, two separate complex-associated pools are found in the cytoplasm. The majority is present as component of an E-cadherin/ catenin adhesion complex composed of at least E-cadherin/CDH1 and beta-catenin/CTNNB1, and possibly alpha-catenin/CTNNA1; the complex is located to adherens junctions. The stable association of CTNNA1 is controversial as CTNNA1 was shown not to bind to F-actin when assembled in the complex. Alternatively, the CTNNA1-containing complex may be linked to F-actin by other proteins such as LIMA1. Another cytoplasmic pool is part of a large complex containing AXIN1, AXIN2, APC, CSNK1A1 and GSK3B that promotes phosphorylation on N-terminal Ser and Thr residues and ubiquitination of CTNNB1. Interacts directly with AXIN1; the interaction is regulated by CK2 via BTRC and its subsequent degradation by the proteasome. Interacts directly with AXIN1; the interaction is regulated by CDK2 phosphorylation. Wnt-dependent activation of DVL antagonizes the action of GSK3B. When GSK3B activity is inhibited the complex dissociates, CTNNB1 is dephosphorylated and is no longer targeted for destruction. The stabilized protein translocates to the nucleus, where it binds TCF/LEF-1 family members, BCL9, BCL9L and possibly also RUVBL1 and CHD8. Binds CTNNBIP and EP300. CTNNB1 forms a ternary complex with LEF1 and EP300 that is disrupted by CTNNBIP1 binding. Interacts with TAX1BP3 (via the PDZ domain); this interaction inhibits the transcriptional activity of CTNNB1. Interacts with AJAP1, BAIAP1, CARM1, CTNNA3, CXADR and PCDH11Y. Binds NHERF1. Interacts with GLIS2. Interacts with XIRP1. Interacts with PTPRU (via the cytoplasmic juxtamembrane domain) and with SLC30A9. Interacts with EMD. Interacts with SCRIB. Interacts with TNIK and TCF7L2. Interacts with SESTD1 and TRPC4. Interacts directly with AXIN1; the interaction is regulated by CDK2 phosphorylation of AXIN1. Interacts with CAV1. Interacts with TRPV4. The TRPV4 and CTNNB1 complex can interact with CDH1. Interacts with VCL. Interacts with PTPRJ. Interacts with PKT7. Interacts with NANOS1. Interacts with CDK2, NDRG2, NEK2 and CDK5. Found in a complex composed of MACF1, APC, AXIN1, CTNNB1 and GSK3B. Interacts with PTK6. Interacts with SOX7; this interaction may lead to proteasomal degradation of active CTNNB1 and thus inhibition of Wnt/beta-catenin-stimulated transcription. Identified in a complex with HINT1 and MITF. Interacts with FHIT. The CTNNB1 and TCF4 complex interacts with PML. Interacts with FERMT2. Identified in a complex with TCF4 and FERMT2. Interacts with RAPGEF2. Interacts with FAT1 (via the cytoplasmic domain). Interacts with RORA. May interact with P-cadherin/CDH3. Interacts with RNF220. Interacts with CTNND2. Interacts (via the C-terminal region) with CBY1. The complex composed, at least, of APC, CTNNB1 and GSK3B interacts with JPT1; the interaction requires the inactive form of GSK3B (phosphorylated at 'Ser-9'). Interacts with DLG5. Interacts with FAM53B; promoting translocation to the nucleus. Interacts with TMEM170B. Interacts with AHI1. Interacts with GID8. Component of an cadherin:catenin adhesion complex composed of at least of CDH26, beta-catenin/CTNNB1, alpha-catenin/CTNNA1 and p120 catenin/CTNND1. Forms a complex comprising APPL1, RUVBL2, APPL2, HDAC1 and HDAC2. Interacts with IRF2BPL; mediates the ubiquitination and degradation of CTNNB1. Interacts with AMFR. Interacts with LMBR1L. Interacts with SOX30; prevents interaction of CTNNB1 with TCF7L2/TCF4 and leads to inhibition of Wnt signaling. Interacts with SOX9; inhibiting CTNNB1 activity by competing with the binding sites of TCF/LEF within CTNNB1, thereby inhibiting the Wnt signaling. Interacts with SPN/CD43 cytoplasmic tail. Interacts (when phosphorylated at Tyr-333) with isoform M2 of PKM (PKM2); promoting transcription activation. Interacts with PKP2 (via HEAD domain). Interacts with CDH1. Interacts (when unphosphorylated) with FLYWCH1, perhaps preventing interaction of CTNNB1 with TCF4, and thereby regulating transcription activation; phosphorylation of CTNNB1 may inhibit the interaction. Interacts (via the central armadillo domains) with probable transcriptional regulator ADNP (via N-terminal region); interaction is direct and stabilizes CTNNB1 by modulating its phosphorylation by glycogen synthase kinase-3 beta GSK3B. Interacts with NR5A2. Interacts with DSG2; the interaction promotes localization of CTNNB1 at cell junctions thus reducing its nuclear localization and subsequent transcription of CTNNB1/TCF-target genes. Post-translationally, phosphorylation by GSK3B requires prior phosphorylation of Ser-45 by another kinase. Phosphorylation proceeds then from Thr-41 to Ser-33. Phosphorylated by NEK2. EGF stimulates tyrosine phosphorylation. Phosphorylated on Ser-33 and Ser-37 by HIPK2. This phosphorylation triggers proteasomal degradation. Phosphorylation at Ser-552 by AMPK promotes stabilization of the protein, enhancing TCF/LEF-mediated transcription. Phosphorylation on Ser-191 and Ser-246 by CDK5. Phosphorylation by CDK2 regulates insulin internalization. Phosphorylation by PTK6 at Tyr-64, Tyr-142, Tyr-331 and/or Tyr-333 with the predominant site at Tyr-64 is not essential for inhibition of transcriptional activity. Phosphorylation by SRC at Tyr-333 promotes interaction with isoform M2 of PKM (PKM2); promoting transcription activation. Ubiquitinated by the SCF(BTRC) E3 ligase complex when phosphorylated by GSK3B, leading to its degradation. Ubiquitinated by a E3 ubiquitin ligase complex containing UBE2D1, SIAH1, CACYBP/SIP, SKP1, APC and TBL1X, leading to its subsequent proteasomal degradation. Ubiquitinated and degraded following interaction with SOX9. Ubiquitinated via 'Lys-11'- and 'Lys-29'-linked ubiquitin chains by UBR5, leading to its stabilization. In terms of processing, S-nitrosylation at Cys-619 within adherens junctions promotes VEGF-induced, NO-dependent endothelial cell permeability by disrupting interaction with E-cadherin, thus mediating disassembly adherens junctions. Post-translationally, O-glycosylation at Ser-23 decreases nuclear localization and transcriptional activity, and increases localization to the plasma membrane and interaction with E-cadherin CDH1. Deacetylated at Lys-49 by SIRT1. Expressed in the testis.

The protein resides in the cytoplasm. Its subcellular location is the nucleus. The protein localises to the cytoskeleton. It is found in the cell junction. It localises to the adherens junction. The protein resides in the cell membrane. Its subcellular location is the microtubule organizing center. The protein localises to the centrosome. It is found in the spindle pole. It localises to the synapse. The protein resides in the cilium basal body. Functionally, key downstream component of the canonical Wnt signaling pathway. In the absence of Wnt, forms a complex with AXIN1, AXIN2, APC, CSNK1A1 and GSK3B that promotes phosphorylation on N-terminal Ser and Thr residues and ubiquitination of CTNNB1 via BTRC and its subsequent degradation by the proteasome. In the presence of Wnt ligand, CTNNB1 is not ubiquitinated and accumulates in the nucleus, where it acts as a coactivator for transcription factors of the TCF/LEF family, leading to activate Wnt responsive genes. Also acts as a coactivator for other transcription factors, such as NR5A2. Promotes epithelial to mesenchymal transition/mesenchymal to epithelial transition (EMT/MET) via driving transcription of CTNNB1/TCF-target genes. Involved in the regulation of cell adhesion, as component of an E-cadherin:catenin adhesion complex. Acts as a negative regulator of centrosome cohesion. Involved in the CDK2/PTPN6/CTNNB1/CEACAM1 pathway of insulin internalization. Blocks anoikis of malignant kidney and intestinal epithelial cells and promotes their anchorage-independent growth by down-regulating DAPK2. Disrupts PML function and PML-NB formation by inhibiting RANBP2-mediated sumoylation of PML. Promotes neurogenesis by maintaining sympathetic neuroblasts within the cell cycle. Involved in chondrocyte differentiation via interaction with SOX9: SOX9-binding competes with the binding sites of TCF/LEF within CTNNB1, thereby inhibiting the Wnt signaling. Acts as a positive regulator of odontoblast differentiation during mesenchymal tooth germ formation, via promoting the transcription of differentiation factors such as LEF1, BMP2 and BMP4. Activity is repressed in a MSX1-mediated manner at the bell stage of mesenchymal tooth germ formation which prevents premature differentiation of odontoblasts. The chain is Catenin beta-1 from Rattus norvegicus (Rat).